We begin with the raw amino-acid sequence, 298 residues long: Bifunctional protein FolD (298 aa).

Residues 166 to 168, serine 195, and isoleucine 236 each bind NADP(+); that span reads GRS.

This sequence belongs to the tetrahydrofolate dehydrogenase/cyclohydrolase family. In terms of assembly, homodimer.

The catalysed reaction is (6R)-5,10-methylene-5,6,7,8-tetrahydrofolate + NADP(+) = (6R)-5,10-methenyltetrahydrofolate + NADPH. It catalyses the reaction (6R)-5,10-methenyltetrahydrofolate + H2O = (6R)-10-formyltetrahydrofolate + H(+). It participates in one-carbon metabolism; tetrahydrofolate interconversion. Catalyzes the oxidation of 5,10-methylenetetrahydrofolate to 5,10-methenyltetrahydrofolate and then the hydrolysis of 5,10-methenyltetrahydrofolate to 10-formyltetrahydrofolate. The sequence is that of Bifunctional protein FolD from Chlorobium phaeobacteroides (strain BS1).